A 157-amino-acid chain; its full sequence is Protein Smg (157 aa).

This sequence belongs to the Smg family.

This Shigella boydii serotype 4 (strain Sb227) protein is Protein Smg.